A 944-amino-acid chain; its full sequence is ATP-dependent RNA helicase DDX42 (944 aa).

Residues methionine 1–glycine 18 show a composition bias toward gly residues. 3 disordered regions span residues methionine 1–phenylalanine 119, methionine 131–aspartate 155, and glutamate 182–isoleucine 203. Positions serine 35–glycine 52 are enriched in low complexity. The segment covering aspartate 70–serine 84 has biased composition (acidic residues). Positions methionine 120–glutamine 157 form a coiled coil. The segment covering methionine 131–aspartate 149 has biased composition (basic and acidic residues). The Q motif signature appears at serine 253–cysteine 281. Residues valine 284–valine 459 form the Helicase ATP-binding domain. Alanine 297–threonine 304 contacts ATP. The DEAD box signature appears at aspartate 407–aspartate 410. The Helicase C-terminal domain maps to tryptophan 487–alanine 632. Disordered regions lie at residues arginine 642–asparagine 682, glycine 723–proline 753, and serine 794–serine 944. A compositionally biased stretch (low complexity) spans glycine 723–serine 737. Over residues leucine 738–asparagine 752 the composition is skewed to polar residues. Low complexity predominate over residues serine 794 to glycine 814. Positions glycine 815 to isoleucine 824 are enriched in gly residues. Basic and acidic residues-rich tracts occupy residues valine 825–threonine 887 and asparagine 901–threonine 926.

This sequence belongs to the DEAD box helicase family. DDX42 subfamily. In terms of assembly, transient component of the SF3B subcomplex of the 17S U2 SnRNP complex.

The protein localises to the cytoplasm. It is found in the nucleus. It catalyses the reaction ATP + H2O = ADP + phosphate + H(+). Its function is as follows. ATP-dependent RNA helicase that binds to partially double-stranded RNAs (dsRNAs) in order to unwind RNA secondary structures. Unwinding is promoted in the presence of single-strand binding proteins. Also mediates RNA duplex formation thereby displacing the single-strand RNA binding protein. ATP and ADP modulate its activity: ATP binding and hydrolysis by DDX42 triggers RNA strand separation, whereas the ADP-bound form of the protein triggers annealing of complementary RNA strands. Required for assembly of the 17S U2 SnRNP complex of the spliceosome, a large ribonucleoprotein complex that removes introns from transcribed pre-mRNAs: DDX42 associates transiently with the SF3B subcomplex of the 17S U2 SnRNP complex and is released after fulfilling its role in the assembly of 17S U2 SnRNP. The protein is ATP-dependent RNA helicase DDX42 (DDX42) of Gallus gallus (Chicken).